A 1167-amino-acid chain; its full sequence is Kinesin-like protein KIN-14M (1167 aa).

The segment at Pro93–Ser130 is disordered. Residues Ser117 to Ser130 show a composition bias toward low complexity. 3 coiled-coil regions span residues Val271 to Met333, Ala366 to Ser398, and Lys432 to Ser489. Positions Asn572 to Val900 constitute a Kinesin motor domain. Gly656–Thr663 contributes to the ATP binding site. The stretch at Ala907 to Asn944 forms a coiled coil. Disordered stretches follow at residues Ser955–Gln974 and Pro1083–Thr1167. The segment covering Lys958 to Lys972 has biased composition (low complexity). 2 stretches are compositionally biased toward polar residues: residues Ala1113–Ser1124 and Thr1151–Thr1167.

This sequence belongs to the TRAFAC class myosin-kinesin ATPase superfamily. Kinesin family. KIN-14 subfamily.

This chain is Kinesin-like protein KIN-14M, found in Oryza sativa subsp. japonica (Rice).